A 655-amino-acid chain; its full sequence is Probable replication restart protein PriA (655 aa).

Positions 368, 371, 377, 380, 396, 399, 408, and 411 each coordinate Zn(2+).

Belongs to the helicase family. PriA subfamily. In terms of assembly, component of the replication restart primosome. The cofactor is Zn(2+).

Its function is as follows. Initiates the restart of stalled replication forks, which reloads the replicative helicase on sites other than the origin of replication. Recognizes and binds to abandoned replication forks and remodels them to uncover a helicase loading site. Promotes assembly of the primosome at these replication forks. This chain is Probable replication restart protein PriA, found in Mycobacterium bovis (strain ATCC BAA-935 / AF2122/97).